The chain runs to 207 residues: Large ribosomal subunit protein uL4 (207 aa).

The interval 45-78 is disordered; it reads RQGTHAVKNRSAVSGGGRKPWRQKGTGRARQGSI.

Belongs to the universal ribosomal protein uL4 family. In terms of assembly, part of the 50S ribosomal subunit.

Functionally, one of the primary rRNA binding proteins, this protein initially binds near the 5'-end of the 23S rRNA. It is important during the early stages of 50S assembly. It makes multiple contacts with different domains of the 23S rRNA in the assembled 50S subunit and ribosome. In terms of biological role, forms part of the polypeptide exit tunnel. This is Large ribosomal subunit protein uL4 from Lacticaseibacillus paracasei (strain ATCC 334 / BCRC 17002 / CCUG 31169 / CIP 107868 / KCTC 3260 / NRRL B-441) (Lactobacillus paracasei).